A 388-amino-acid chain; its full sequence is Quinolone resistance protein NorA (388 aa).

The next 12 membrane-spanning stretches (helical) occupy residues 5-25 (IFVLYFNIFLIFLGIGLVIPV), 42-62 (LLVAAFALSQMIISPFGGTLA), 69-89 (LIICIGLILFSVSEFMFAVGH), 99-119 (VIGGMSAGMVMPGVTGLIADV), 129-149 (FGYMSAIINSGFILGPGIGGF), 157-177 (MPFYFAGALGILAFIMSVVLI), 201-221 (WKVFITPAILTLVLAFGLSAF), 239-259 (DISIAITGGGIFGALFQIYFF), 269-289 (LTFIAWSLIYSVIVLVLLVIA), 293-313 (WTIMVISFAVFIGFDMIRPAI), 331-351 (LNSTFTSMGNFIGPLIAGALF), and 355-375 (IEAPIYMAIGVSLAGVVIVLI).

It belongs to the major facilitator superfamily. TCR/Tet family.

The protein localises to the cell membrane. Involved in quinolone resistance. May constitute a membrane-associated active efflux pump of hydrophilic quinolones. In Staphylococcus aureus (strain MRSA252), this protein is Quinolone resistance protein NorA (norA).